Here is a 318-residue protein sequence, read N- to C-terminus: L-lactate dehydrogenase (318 aa).

The NAD(+) site is built by V14, D35, K40, and Y66. Substrate-binding positions include R89 and 121–124 (NPVD). NAD(+) is bound at residue S144. 149 to 152 (DTAR) contacts substrate. H176 functions as the Proton acceptor in the catalytic mechanism. Position 220 is a phosphotyrosine (Y220). T229 lines the substrate pocket.

This sequence belongs to the LDH/MDH superfamily. LDH family. As to quaternary structure, homotetramer.

Its subcellular location is the cytoplasm. It carries out the reaction (S)-lactate + NAD(+) = pyruvate + NADH + H(+). It functions in the pathway fermentation; pyruvate fermentation to lactate; (S)-lactate from pyruvate: step 1/1. Its function is as follows. Catalyzes the conversion of lactate to pyruvate. The chain is L-lactate dehydrogenase from Staphylococcus haemolyticus (strain JCSC1435).